Consider the following 390-residue polypeptide: Elongation factor Tu 2 (390 aa).

The tr-type G domain occupies 10 to 201 (KPHVNVGTIG…LDEYVAVPPR (192 aa)). A G1 region spans residues 19–26 (GHVDHGKT). 19-26 (GHVDHGKT) provides a ligand contact to GTP. Mg(2+) is bound at residue threonine 26. Residues 55–59 (GITIA) are G2. The G3 stretch occupies residues 76 to 79 (DCPG). GTP contacts are provided by residues 76–80 (DCPGH) and 131–134 (NKAD). Positions 131–134 (NKAD) are G4. The interval 168–170 (SAL) is G5.

The protein belongs to the TRAFAC class translation factor GTPase superfamily. Classic translation factor GTPase family. EF-Tu/EF-1A subfamily. In terms of assembly, monomer.

The protein localises to the cytoplasm. The catalysed reaction is GTP + H2O = GDP + phosphate + H(+). GTP hydrolase that promotes the GTP-dependent binding of aminoacyl-tRNA to the A-site of ribosomes during protein biosynthesis. The protein is Elongation factor Tu 2 of Wolbachia pipientis wMel.